Here is a 272-residue protein sequence, read N- to C-terminus: uncharacterized protein (272 aa).

Active-site residues include Asp-71 and Glu-163.

This sequence belongs to the glycosyl hydrolase 25 family.

This is an uncharacterized protein from Escherichia coli (strain K12).